A 471-amino-acid chain; its full sequence is Serine/threonine-protein kinase AtPK2/AtPK19 (471 aa).

The segment at 1–21 (MVSSQCSVANKNQTGKPFQKH) is disordered. One can recognise a Protein kinase domain in the interval 140 to 395 (FEVLKVVGQG…AEEIKKHKWF (256 aa)). Residues 146–154 (VGQGAFGKV) and Lys-169 contribute to the ATP site. Asp-263 acts as the Proton acceptor in catalysis. The activation loop stretch occupies residues 281-307 (DFGLAKEFEENTRSNSMCGTTEYMAPE). Ser-296 carries the post-translational modification Phosphoserine; by PDPK1. Positions 396–466 (KAINWKKLEA…VRPPHSFLHR (71 aa)) constitute an AGC-kinase C-terminal domain. Thr-455 is modified (phosphothreonine; by TOR).

It belongs to the protein kinase superfamily. AGC Ser/Thr protein kinase family. S6 kinase subfamily. As to quaternary structure, interacts with TAP46. Binds to MRF1. Undergoes serine-specific autophosphorylation. Phosphorylated at Thr-455 by TOR.

The enzyme catalyses L-seryl-[protein] + ATP = O-phospho-L-seryl-[protein] + ADP + H(+). It catalyses the reaction L-threonyl-[protein] + ATP = O-phospho-L-threonyl-[protein] + ADP + H(+). With respect to regulation, activated by PDK1. Downstream effector of TOR signaling pathway. May be involved in adaptation of plant to cold or high-salt conditions. Mediates the phosphorylation of MRFs (e.g. MRF1). In Arabidopsis thaliana (Mouse-ear cress), this protein is Serine/threonine-protein kinase AtPK2/AtPK19 (ATPK2).